Reading from the N-terminus, the 316-residue chain is WEB family protein At3g13190 (316 aa).

Coiled coils occupy residues 42–90 (WNKE…MIND), 119–195 (EEES…AEEH), and 233–266 (RDET…MAQE). Residues 295 to 316 (STKEVLKSKPRSSSKEGCLVKC) are disordered.

This sequence belongs to the WEB family.

The chain is WEB family protein At3g13190 from Arabidopsis thaliana (Mouse-ear cress).